The following is a 600-amino-acid chain: DNA ligase (600 aa).

ATP is bound at residue aspartate 258. Lysine 260 serves as the catalytic N6-AMP-lysine intermediate. Positions 265, 280, 310, 350, 427, and 433 each coordinate ATP.

It belongs to the ATP-dependent DNA ligase family. Mg(2+) is required as a cofactor.

It carries out the reaction ATP + (deoxyribonucleotide)n-3'-hydroxyl + 5'-phospho-(deoxyribonucleotide)m = (deoxyribonucleotide)n+m + AMP + diphosphate.. Inhibited by PCNA123 and PCNA323. In terms of biological role, DNA ligase that seals nicks in double-stranded DNA during DNA replication, DNA recombination and DNA repair. In Sulfurisphaera tokodaii (strain DSM 16993 / JCM 10545 / NBRC 100140 / 7) (Sulfolobus tokodaii), this protein is DNA ligase.